The sequence spans 37 residues: M-oxotoxin-Ot2d (37 aa).

As to expression, expressed by the venom gland.

The protein localises to the secreted. In terms of biological role, disrupts biological membranes, particularly those rich in phosphocholine. Has antimicrobial activity against Gram-negative bacterium E.coli, Gram-positive bacteria B.subtilis and S.aureus, and hemolytic activity against sheep, pig and guinea pig red blood cells. Has insecticidal activity against S.frugiperda ovarian cells by opening non-selective ion channels. Enhances the insecticidal activity of spider venom neurotoxic peptides. The chain is M-oxotoxin-Ot2d from Oxyopes takobius (Lynx spider).